We begin with the raw amino-acid sequence, 639 residues long: Developmental regulatory protein wetA (639 aa).

4 disordered regions span residues 65–97 (MDPS…EFDF), 206–369 (TTMR…SAAS), 418–552 (GLLI…SADE), and 587–613 (LMTG…RRRR). Residues 69–78 (HHHHHPHHHA) are compositionally biased toward basic residues. Composition is skewed to polar residues over residues 81 to 90 (ESSTTSSGVS) and 214 to 226 (VSQT…SPSM). Over residues 246–255 (RGRRAHRAHT) the composition is skewed to basic residues. Composition is skewed to low complexity over residues 256–275 (QHAL…QAHQ), 346–369 (QQQW…SAAS), and 506–526 (HSSG…RVSV).

The protein belongs to the wetA family.

BrlA, abaA and wetA are pivotal regulators of conidiophore development and conidium maturation. They act individually and together to regulate their own expression and that of numerous other sporulation-specific genes. Acts as a crucial regulator of both conidiation capacity and conidial quality. Plays a role in virulence. The protein is Developmental regulatory protein wetA of Beauveria bassiana (strain ARSEF 2860) (White muscardine disease fungus).